We begin with the raw amino-acid sequence, 466 residues long: Cytochrome c-552 (466 aa).

Residues 1 to 27 form the signal peptide; that stretch reads MVRNLTKKSFALSALVAASLMASGVMA. His87 is a heme c binding site. Positions 115, 118, and 119 each coordinate heme. Positions 153, 156, 157, 195, 198, and 199 each coordinate heme c. Residues Glu201, Tyr202, Lys250, and Gln252 each contribute to the Ca(2+) site. A substrate-binding site is contributed by Tyr202. Substrate is bound at residue His253. The heme c site is built by His264, Cys271, Cys274, His275, His290, Cys303, Cys306, His307, and His382.

Belongs to the cytochrome c-552 family. It depends on Ca(2+) as a cofactor. Heme c is required as a cofactor.

The protein resides in the periplasm. It catalyses the reaction 6 Fe(III)-[cytochrome c] + NH4(+) + 2 H2O = 6 Fe(II)-[cytochrome c] + nitrite + 8 H(+). Its pathway is nitrogen metabolism; nitrate reduction (assimilation). Its function is as follows. Catalyzes the reduction of nitrite to ammonia, consuming six electrons in the process. This Shewanella sediminis (strain HAW-EB3) protein is Cytochrome c-552.